Here is a 549-residue protein sequence, read N- to C-terminus: Probable protein kinase UbiB (549 aa).

Residues 123 to 501 (DFNETPLASA…QQQAHKSNYL (379 aa)) enclose the Protein kinase domain. Residues 129–137 (LASASISQV) and K152 each bind ATP. D287 (proton acceptor) is an active-site residue. Helical transmembrane passes span 498–518 (SNYLLITSAILLICGTLLFNQ) and 520–540 (ATLWSPYVCLISGAALWIIGW).

Belongs to the ABC1 family. UbiB subfamily.

The protein resides in the cell inner membrane. Its pathway is cofactor biosynthesis; ubiquinone biosynthesis [regulation]. Its function is as follows. Is probably a protein kinase regulator of UbiI activity which is involved in aerobic coenzyme Q (ubiquinone) biosynthesis. The sequence is that of Probable protein kinase UbiB from Shewanella sp. (strain MR-4).